The primary structure comprises 100 residues: Glutamyl-tRNA(Gln) amidotransferase subunit C (100 aa).

Belongs to the GatC family. Heterotrimer of A, B and C subunits.

The catalysed reaction is L-glutamyl-tRNA(Gln) + L-glutamine + ATP + H2O = L-glutaminyl-tRNA(Gln) + L-glutamate + ADP + phosphate + H(+). It carries out the reaction L-aspartyl-tRNA(Asn) + L-glutamine + ATP + H2O = L-asparaginyl-tRNA(Asn) + L-glutamate + ADP + phosphate + 2 H(+). Functionally, allows the formation of correctly charged Asn-tRNA(Asn) or Gln-tRNA(Gln) through the transamidation of misacylated Asp-tRNA(Asn) or Glu-tRNA(Gln) in organisms which lack either or both of asparaginyl-tRNA or glutaminyl-tRNA synthetases. The reaction takes place in the presence of glutamine and ATP through an activated phospho-Asp-tRNA(Asn) or phospho-Glu-tRNA(Gln). This chain is Glutamyl-tRNA(Gln) amidotransferase subunit C, found in Rickettsia conorii (strain ATCC VR-613 / Malish 7).